The chain runs to 235 residues: UPF0758 protein CD630_11440 (235 aa).

Positions 113–235 constitute an MPN domain; that stretch reads KIMNPWDIQR…YFSFKENMII (123 aa). 3 residues coordinate Zn(2+): His-184, His-186, and Asp-197. The JAMM motif signature appears at 184–197; sequence HNHPSGSVEPSRED.

The protein belongs to the UPF0758 family.

The polypeptide is UPF0758 protein CD630_11440 (Clostridioides difficile (strain 630) (Peptoclostridium difficile)).